Here is a 588-residue protein sequence, read N- to C-terminus: Pescadillo homolog (588 aa).

A BRCT domain is found at 344–437 (PVSTLFSDFV…KLVPANLYLP (94 aa)). Disordered stretches follow at residues 446–533 (SPWG…EAEE) and 559–588 (KKEEKVENLKKKKKQISKTKEKLTKLEGKK). Residues 460 to 493 (DAEEEGEDDEDEDSEEGSGAEVEENVDEDEDDEE) are compositionally biased toward acidic residues. Basic and acidic residues-rich tracts occupy residues 510–519 (SDIKDTEVKS) and 576–588 (KTKEKLTKLEGKK). A coiled-coil region spans residues 512 to 588 (IKDTEVKSKN…EKLTKLEGKK (77 aa)).

The protein belongs to the pescadillo family. Component of the NOP7 complex, composed of ERB1, NOP7 and YTM1. The complex is held together by ERB1, which interacts with NOP7 via its N-terminal domain and with YTM1 via a high-affinity interaction between the seven-bladed beta-propeller domains of the 2 proteins. The NOP7 complex associates with the 66S pre-ribosome.

It is found in the nucleus. Its subcellular location is the nucleolus. The protein localises to the nucleoplasm. In terms of biological role, component of the NOP7 complex, which is required for maturation of the 25S and 5.8S ribosomal RNAs and formation of the 60S ribosome. The polypeptide is Pescadillo homolog (Vanderwaltozyma polyspora (strain ATCC 22028 / DSM 70294 / BCRC 21397 / CBS 2163 / NBRC 10782 / NRRL Y-8283 / UCD 57-17) (Kluyveromyces polysporus)).